The following is a 148-amino-acid chain: Snaclec flavocetin-A subunit beta (148 aa).

Positions 1–23 are cleaved as a signal peptide; it reads MGQFIFVSFGFLVVATSLSGTEA. Intrachain disulfides connect Cys27–Cys38, Cys55–Cys144, and Cys121–Cys136. The 112-residue stretch at 34–145 folds into the C-type lectin domain; the sequence is YDEHCYQVFQ…CSSKRYVVCK (112 aa).

The protein belongs to the snaclec family. In terms of assembly, tetramer of heterodimers of alpha and beta subunits (alphabeta)(4); disulfide-linked. In terms of tissue distribution, expressed by the venom gland.

It is found in the secreted. In terms of biological role, strong platelet aggregation inhibitor. Binds specifically to platelet glycoprotein Ibalpha (GP1BA) with high affinity and inhibits vWF-dependent platelet aggregation. Has also been observed to induce small agglutinates in washed platelets by binding to GPIb. This chain is Snaclec flavocetin-A subunit beta, found in Protobothrops flavoviridis (Habu).